The sequence spans 120 residues: uncharacterized protein (120 aa).

The segment at Pro-80–Ala-99 is disordered.

This is an uncharacterized protein from Goose circovirus (GoCV).